Consider the following 1097-residue polypeptide: DNA polymerase catalytic subunit (1097 aa).

The tract at residues 1069 to 1097 (RGGDDSDGGDSEKENMDTERSSSHEAMET) is disordered. Residues 1078–1097 (DSEKENMDTERSSSHEAMET) show a composition bias toward basic and acidic residues.

This sequence belongs to the DNA polymerase type-B family.

It localises to the host nucleus. The enzyme catalyses DNA(n) + a 2'-deoxyribonucleoside 5'-triphosphate = DNA(n+1) + diphosphate. This is DNA polymerase catalytic subunit (UL54) from Murid herpesvirus 1 (strain Smith) (MuHV-1).